The primary structure comprises 279 residues: Tryptophan synthase alpha chain (279 aa).

Catalysis depends on proton acceptor residues Glu-49 and Asp-60.

This sequence belongs to the TrpA family. Tetramer of two alpha and two beta chains.

The catalysed reaction is (1S,2R)-1-C-(indol-3-yl)glycerol 3-phosphate + L-serine = D-glyceraldehyde 3-phosphate + L-tryptophan + H2O. Its pathway is amino-acid biosynthesis; L-tryptophan biosynthesis; L-tryptophan from chorismate: step 5/5. The alpha subunit is responsible for the aldol cleavage of indoleglycerol phosphate to indole and glyceraldehyde 3-phosphate. In Nitrosospira multiformis (strain ATCC 25196 / NCIMB 11849 / C 71), this protein is Tryptophan synthase alpha chain.